A 319-amino-acid polypeptide reads, in one-letter code: tRNA dimethylallyltransferase (319 aa).

11-18 provides a ligand contact to ATP; the sequence is GPTCSGKS. Substrate is bound at residue 13-18; the sequence is TCSGKS. 2 interaction with substrate tRNA regions span residues 36-39 and 160-164; these read DSMQ and QRIAR.

This sequence belongs to the IPP transferase family. As to quaternary structure, monomer. Mg(2+) is required as a cofactor.

The catalysed reaction is adenosine(37) in tRNA + dimethylallyl diphosphate = N(6)-dimethylallyladenosine(37) in tRNA + diphosphate. In terms of biological role, catalyzes the transfer of a dimethylallyl group onto the adenine at position 37 in tRNAs that read codons beginning with uridine, leading to the formation of N6-(dimethylallyl)adenosine (i(6)A). This Granulibacter bethesdensis (strain ATCC BAA-1260 / CGDNIH1) protein is tRNA dimethylallyltransferase.